The following is a 214-amino-acid chain: Holliday junction branch migration complex subunit RuvA (214 aa).

Positions 1-63 (MISSLRGTVL…EDSLTLFGFP (63 aa)) are domain I. Residues 64 to 139 (GPDELRAFEL…KLFVTQPRAR (76 aa)) are domain II. The tract at residues 139–143 (RSATS) is flexible linker. Residues 144–214 (AASTVTADVV…AAPTGQAADR (71 aa)) are domain III.

Belongs to the RuvA family. Homotetramer. Forms an RuvA(8)-RuvB(12)-Holliday junction (HJ) complex. HJ DNA is sandwiched between 2 RuvA tetramers; dsDNA enters through RuvA and exits via RuvB. An RuvB hexamer assembles on each DNA strand where it exits the tetramer. Each RuvB hexamer is contacted by two RuvA subunits (via domain III) on 2 adjacent RuvB subunits; this complex drives branch migration. In the full resolvosome a probable DNA-RuvA(4)-RuvB(12)-RuvC(2) complex forms which resolves the HJ.

It localises to the cytoplasm. Its function is as follows. The RuvA-RuvB-RuvC complex processes Holliday junction (HJ) DNA during genetic recombination and DNA repair, while the RuvA-RuvB complex plays an important role in the rescue of blocked DNA replication forks via replication fork reversal (RFR). RuvA specifically binds to HJ cruciform DNA, conferring on it an open structure. The RuvB hexamer acts as an ATP-dependent pump, pulling dsDNA into and through the RuvAB complex. HJ branch migration allows RuvC to scan DNA until it finds its consensus sequence, where it cleaves and resolves the cruciform DNA. This chain is Holliday junction branch migration complex subunit RuvA, found in Clavibacter michiganensis subsp. michiganensis (strain NCPPB 382).